We begin with the raw amino-acid sequence, 395 residues long: uncharacterized protein (395 aa).

Disordered regions lie at residues arginine 185–alanine 282 and glycine 316–serine 372. The segment covering leucine 248 to arginine 257 has biased composition (basic residues). Positions alanine 342–tyrosine 360 are enriched in low complexity.

This is an uncharacterized protein from Streptomyces fradiae (Streptomyces roseoflavus).